The sequence spans 212 residues: Probable GTP-binding protein EngB (212 aa).

Residues S38–P210 enclose the EngB-type G domain. GTP is bound by residues G46–S53, G73–Q77, D91–G94, T158–D161, and V189–S191. Residues S53 and T75 each contribute to the Mg(2+) site.

It belongs to the TRAFAC class TrmE-Era-EngA-EngB-Septin-like GTPase superfamily. EngB GTPase family. It depends on Mg(2+) as a cofactor.

Functionally, necessary for normal cell division and for the maintenance of normal septation. The chain is Probable GTP-binding protein EngB from Rickettsia felis (strain ATCC VR-1525 / URRWXCal2) (Rickettsia azadi).